Here is a 408-residue protein sequence, read N- to C-terminus: LL-diaminopimelate aminotransferase (408 aa).

Tyr-15 and Gly-42 together coordinate substrate. Pyridoxal 5'-phosphate contacts are provided by residues Tyr-72, 108-109, Tyr-132, Asn-187, Tyr-218, and 246-248; these read SK and SFS. Substrate is bound by residues Lys-109, Tyr-132, and Asn-187. Lys-249 bears the N6-(pyridoxal phosphate)lysine mark. 2 residues coordinate pyridoxal 5'-phosphate: Arg-257 and Asn-291. Asn-291 and Arg-387 together coordinate substrate.

The protein belongs to the class-I pyridoxal-phosphate-dependent aminotransferase family. LL-diaminopimelate aminotransferase subfamily. In terms of assembly, homodimer. The cofactor is pyridoxal 5'-phosphate.

It carries out the reaction (2S,6S)-2,6-diaminopimelate + 2-oxoglutarate = (S)-2,3,4,5-tetrahydrodipicolinate + L-glutamate + H2O + H(+). Its pathway is amino-acid biosynthesis; L-lysine biosynthesis via DAP pathway; LL-2,6-diaminopimelate from (S)-tetrahydrodipicolinate (aminotransferase route): step 1/1. Functionally, involved in the synthesis of meso-diaminopimelate (m-DAP or DL-DAP), required for both lysine and peptidoglycan biosynthesis. Catalyzes the direct conversion of tetrahydrodipicolinate to LL-diaminopimelate. The protein is LL-diaminopimelate aminotransferase of Prochlorococcus marinus (strain NATL2A).